The primary structure comprises 104 residues: Large ribosomal subunit protein uL23 (104 aa).

This sequence belongs to the universal ribosomal protein uL23 family. As to quaternary structure, part of the 50S ribosomal subunit. Contacts protein L29, and trigger factor when it is bound to the ribosome.

In terms of biological role, one of the early assembly proteins it binds 23S rRNA. One of the proteins that surrounds the polypeptide exit tunnel on the outside of the ribosome. Forms the main docking site for trigger factor binding to the ribosome. This is Large ribosomal subunit protein uL23 from Nostoc punctiforme (strain ATCC 29133 / PCC 73102).